A 329-amino-acid chain; its full sequence is Phosphatidylcholine:ceramide cholinephosphotransferase 3 (329 aa).

Over Met1 to Gln26 the chain is Cytoplasmic. A helical transmembrane segment spans residues Val27 to Ile47. At Thr48–Gly74 the chain is on the extracellular side. The helical transmembrane segment at Met75–Phe95 threads the bilayer. The Cytoplasmic segment spans residues Lys96–Arg147. A helical transmembrane segment spans residues Phe148 to Leu168. Residues Pro169 to Thr211 lie on the Extracellular side of the membrane. Residues Val212 to Phe232 form a helical membrane-spanning segment. A topological domain (cytoplasmic) is located at residue Arg233. A helical transmembrane segment spans residues Pro234 to Tyr254. Residues Thr255–Asp257 lie on the Extracellular side of the membrane. Residues Val258–Gly278 form a helical membrane-spanning segment. Topologically, residues Ala279–His329 are cytoplasmic.

It belongs to the sphingomyelin synthase family.

The protein resides in the membrane. The catalysed reaction is an N-acylsphing-4-enine + a 1,2-diacyl-sn-glycero-3-phosphocholine = a sphingomyelin + a 1,2-diacyl-sn-glycerol. The enzyme catalyses an N-acylsphinganine + a 1,2-diacyl-sn-glycero-3-phosphocholine = an N-acylsphinganine-1-phosphocholine + a 1,2-diacyl-sn-glycerol. It carries out the reaction an N-acylsphing-4-enine + a 1,2-diacyl-sn-glycero-3-phosphoethanolamine = an N-acylsphing-4-enine 1-phosphoethanolamine + a 1,2-diacyl-sn-glycerol. It catalyses the reaction an N-acylsphinganine + a 1,2-diacyl-sn-glycero-3-phosphoethanolamine = an N-acylsphinganine-1-phosphoethanolamine + a 1,2-diacyl-sn-glycerol. Functionally, bifunctional sphingomyelin (SM)/ethanolamine phosphorylceramide (EPC) synthase with minimal inositol phosphorylceramide (IPC) synthase activity. Specificity is likely to be defined by residues in the lumenal catalytic domain that interact with the polar head groups of the phospholipid donors. SM is synthesized by both stages of the parasite life cycle, bloodstream forms (BSF) and procyclic forms (PCF), by transferring the phosphocholine from a 1,2-diacyl-sn-glycero-3-phosphocholine to an N-acylsphing-4-enine (ceramide) or an N-acylsphinganine (dihydroceramide). Similarly, EPC is synthesized by transferring phosphoethanolamine from a 1,2-diacyl-sn-glycero-3-phosphoethanolamine to ceramide or dihydroceramide by BSF and PCF, while IPC is confined to PCF. The ceramide/dihydroceramide ratios are skewed towards dihydroceramide in PCF parasites and ceramide in BSF parasites, this is likely due to differential expression and/or regulation of dihydroceramide desaturase, the enzyme responsible for converting dihydroceramide to ceramide. This is Phosphatidylcholine:ceramide cholinephosphotransferase 3 from Trypanosoma brucei brucei.